The chain runs to 294 residues: Ribosomal protein L11 methyltransferase (294 aa).

S-adenosyl-L-methionine contacts are provided by Thr144, Gly165, Asp187, and Asn229.

This sequence belongs to the methyltransferase superfamily. PrmA family.

The protein resides in the cytoplasm. The enzyme catalyses L-lysyl-[protein] + 3 S-adenosyl-L-methionine = N(6),N(6),N(6)-trimethyl-L-lysyl-[protein] + 3 S-adenosyl-L-homocysteine + 3 H(+). Its function is as follows. Methylates ribosomal protein L11. The polypeptide is Ribosomal protein L11 methyltransferase (Pseudomonas aeruginosa (strain LESB58)).